The chain runs to 344 residues: Heat-inducible transcription repressor HrcA (344 aa).

It belongs to the HrcA family.

Functionally, negative regulator of class I heat shock genes (grpE-dnaK-dnaJ and groELS operons). Prevents heat-shock induction of these operons. The protein is Heat-inducible transcription repressor HrcA of Corynebacterium aurimucosum (strain ATCC 700975 / DSM 44827 / CIP 107346 / CN-1) (Corynebacterium nigricans).